The chain runs to 376 residues: TATA box-binding protein-like 2 (376 aa).

The segment at 103–184 (PDEVTQENKD…SDSLSLASIT (82 aa)) is disordered. Residues 108–122 (QENKDQPVISKHETE) show a composition bias toward basic and acidic residues. Over residues 126–159 (ESQSPQSRLPSPSEQDVGLGLNSSSLSNSHSQLH) the composition is skewed to low complexity. The segment covering 175–184 (SDSLSLASIT) has biased composition (polar residues).

Belongs to the TBP family. In terms of assembly, interacts with TAF3.

It is found in the cytoplasm. The protein resides in the nucleus. Functionally, transcription factor required in complex with TAF3 for the differentiation of myoblasts into myocytes. The complex replaces TFIID at specific promoters at an early stage in the differentiation process. The polypeptide is TATA box-binding protein-like 2 (Pan troglodytes (Chimpanzee)).